The primary structure comprises 65 residues: Myosin-11 (65 aa).

Residues arginine 1–lysine 65 form the Myosin motor domain.

This sequence belongs to the TRAFAC class myosin-kinesin ATPase superfamily. Myosin family. As to quaternary structure, muscle myosin is a hexameric protein that consists of 2 heavy chain subunits (MHC), 2 alkali light chain subunits (MLC) and 2 regulatory light chain subunits (MLC-2).

It localises to the melanosome. It is found in the cytoplasm. Its subcellular location is the myofibril. Functionally, muscle contraction. The polypeptide is Myosin-11 (MYH11) (Sus scrofa (Pig)).